The primary structure comprises 106 residues: Tubulin-specific chaperone A (106 aa).

S94 is modified (phosphoserine).

It belongs to the TBCA family.

It localises to the cytoplasm. Its subcellular location is the cytoskeleton. In terms of biological role, tubulin-folding protein; involved in the early step of the tubulin folding pathway. In Saccharomyces cerevisiae (strain ATCC 204508 / S288c) (Baker's yeast), this protein is Tubulin-specific chaperone A (RBL2).